The following is a 474-amino-acid chain: MTKKLHIKTWGCQMNEYDSSKMADLLDATHGYQLTDVAEEADVLLLNTCSIREKAQEKVFHQLGRWRLLKEKNPDLIIGVGGCVASQEGEHIRQRAHYVDIIFGPQTLHRLPEMINSVRGDRSPVVDISFPEIEKFDRLPEPRAEGPTAFVSIMEGCNKYCTYCVVPYTRGEEVSRPSDDILFEIAQLAAQGVREVNLLGQNVNAWRGENYDGTTGTFADLLRLVAAIDGIDRIRFTTSHPIEFTDDIIEVYRDTPELVSFLHLPVQSGSDRVLNLMGRTHTALEYKAIIRKLRAARPDIQISSDFIVGFPGETSDDFEKTMKLIADVNFDMSYSFIFSARPGTPAADMVDDVPEEEKKQRLYILQERINQQAMAWSRRMLGSTQRILVEGTSRKNIMELSGRTENNRVVNFEGTPEMIGKFVDVEITDVYPNSLRGKVVRTEDEMGLRVAETPESVIARTRKENELGVGFYQP.

Residues Lys3–Gly120 form the MTTase N-terminal domain. Cys12, Cys49, Cys83, Cys157, Cys161, and Cys164 together coordinate [4Fe-4S] cluster. One can recognise a Radical SAM core domain in the interval Arg143–Ala375. Residues Arg378 to Arg441 enclose the TRAM domain.

It belongs to the methylthiotransferase family. MiaB subfamily. As to quaternary structure, monomer. [4Fe-4S] cluster is required as a cofactor.

It is found in the cytoplasm. It catalyses the reaction N(6)-dimethylallyladenosine(37) in tRNA + (sulfur carrier)-SH + AH2 + 2 S-adenosyl-L-methionine = 2-methylsulfanyl-N(6)-dimethylallyladenosine(37) in tRNA + (sulfur carrier)-H + 5'-deoxyadenosine + L-methionine + A + S-adenosyl-L-homocysteine + 2 H(+). Functionally, catalyzes the methylthiolation of N6-(dimethylallyl)adenosine (i(6)A), leading to the formation of 2-methylthio-N6-(dimethylallyl)adenosine (ms(2)i(6)A) at position 37 in tRNAs that read codons beginning with uridine. The chain is tRNA-2-methylthio-N(6)-dimethylallyladenosine synthase from Salmonella arizonae (strain ATCC BAA-731 / CDC346-86 / RSK2980).